A 1231-amino-acid chain; its full sequence is Cohesin subunit SA-2 (1231 aa).

Met-1 carries the N-acetylmethionine modification. The interval 1–75 (MIAAPEIPTD…GPNRMNGHHQ (75 aa)) is disordered. Positions 36–48 (KQGKGKTCKKGKK) are enriched in basic residues. The SCD domain maps to 293–378 (FVHRYRDAIA…SRFKDRIVSM (86 aa)). At Lys-607 the chain carries N6-acetyllysine. 4 positions are modified to phosphoserine: Ser-1058, Ser-1061, Ser-1064, and Ser-1065. Positions 1064–1083 (SSRGSTVRSKKSKPSTGKRK) are disordered. Over residues 1071–1082 (RSKKSKPSTGKR) the composition is skewed to basic residues. At Thr-1112 the chain carries Phosphothreonine. Ser-1177 and Ser-1178 each carry phosphoserine.

This sequence belongs to the SCC3 family. Interacts directly with RAD21 in cohesin complex. Cohesin complexes are composed of a heterodimer between a SMC1 protein (SMC1A or SMC1B) and SMC3, which are attached via their hinge domain, and RAD21 which link them at their heads, and one STAG protein (STAG1, STAG2 or STAG3). In cohesin complexes, STAG2 is mutually exclusive with STAG1 and STAG3. Phosphorylated by PLK1. The large dissociation of cohesin from chromosome arms during prophase is partly due to its phosphorylation.

It is found in the nucleus. It localises to the chromosome. Its subcellular location is the centromere. Its function is as follows. Component of cohesin complex, a complex required for the cohesion of sister chromatids after DNA replication. The cohesin complex apparently forms a large proteinaceous ring within which sister chromatids can be trapped. At anaphase, the complex is cleaved and dissociates from chromatin, allowing sister chromatids to segregate. The cohesin complex may also play a role in spindle pole assembly during mitosis. The sequence is that of Cohesin subunit SA-2 (STAG2) from Homo sapiens (Human).